The following is a 609-amino-acid chain: Laccase-1 (609 aa).

The signal sequence occupies residues M1 to A20. Residues V45–R141 form the Plastocyanin-like 1 domain. N75 carries N-linked (GlcNAc...) asparagine glycosylation. Residues H79, H81, H123, and H125 each coordinate Cu cation. N-linked (GlcNAc...) asparagine glycosylation occurs at N257. The 103-residue stretch at T270–V372 folds into the Plastocyanin-like 2 domain. Residues N403, N443, and N486 are each glycosylated (N-linked (GlcNAc...) asparagine). The region spanning S463–D602 is the Plastocyanin-like 3 domain. H508, H511, and H513 together coordinate Cu cation. N531 and N546 each carry an N-linked (GlcNAc...) asparagine glycan. Cu cation contacts are provided by H585, C586, H587, and H591.

It belongs to the multicopper oxidase family. Cu cation serves as cofactor.

It localises to the secreted. The catalysed reaction is 4 hydroquinone + O2 = 4 benzosemiquinone + 2 H2O. Functionally, required for the conversion of the yellow polyketide pigment synthesized by wA to the conidial green pigment. This Emericella nidulans (strain FGSC A4 / ATCC 38163 / CBS 112.46 / NRRL 194 / M139) (Aspergillus nidulans) protein is Laccase-1 (yA).